The sequence spans 309 residues: Voltage-dependent anion channel-forming protein mll4386 (309 aa).

3 helical membrane passes run 32–52 (ILPQIFGFAVYSAVILALARW), 58–78 (GVFNITPFGLVGVTLSIYLSF), and 227–247 (IVCLLLPIGLISTTGWATPLF).

The protein belongs to the anion channel-forming bestrophin (TC 1.A.46) family.

It is found in the cell membrane. The chain is Voltage-dependent anion channel-forming protein mll4386 from Mesorhizobium japonicum (strain LMG 29417 / CECT 9101 / MAFF 303099) (Mesorhizobium loti (strain MAFF 303099)).